The chain runs to 347 residues: UDP-3-O-acylglucosamine N-acyltransferase 1 (347 aa).

His-246 serves as the catalytic Proton acceptor.

The protein belongs to the transferase hexapeptide repeat family. LpxD subfamily. In terms of assembly, homotrimer.

The catalysed reaction is a UDP-3-O-[(3R)-3-hydroxyacyl]-alpha-D-glucosamine + a (3R)-hydroxyacyl-[ACP] = a UDP-2-N,3-O-bis[(3R)-3-hydroxyacyl]-alpha-D-glucosamine + holo-[ACP] + H(+). The protein operates within bacterial outer membrane biogenesis; LPS lipid A biosynthesis. Its function is as follows. Catalyzes the N-acylation of UDP-3-O-acylglucosamine using 3-hydroxyacyl-ACP as the acyl donor. Is involved in the biosynthesis of lipid A, a phosphorylated glycolipid that anchors the lipopolysaccharide to the outer membrane of the cell. This is UDP-3-O-acylglucosamine N-acyltransferase 1 from Francisella tularensis subsp. tularensis (strain SCHU S4 / Schu 4).